Reading from the N-terminus, the 431-residue chain is Guanine nucleotide exchange factor rei-2 (431 aa).

Positions 1 to 21 (MDETATSSEVTETFVSDPTTR) are enriched in polar residues. Positions 1–28 (MDETATSSEVTETFVSDPTTRQFEEDGH) are disordered. Coiled coils occupy residues 149–171 (EVLN…AESL) and 214–247 (LEAQ…RISE). Residues 249–298 (IHEERSTGSLESAVSSDQEDQKSDFKSSESLPGNPPPYAPTAPPPYEDKY) are disordered. A compositionally biased stretch (polar residues) spans 255 to 264 (TGSLESAVSS). A compositionally biased stretch (pro residues) spans 281–293 (GNPPPYAPTAPPP).

Belongs to the SH3BP5 family. Interacts with rab-11.1. Binds preferentially to the GDP-bound form of rab-11.1.

Functionally, guanine nucleotide exchange factor for Rab GTPase Rab-11.1. May spatially and temporally regulate the distribution of Rab-11.1 to target membranes during embryogenesis. May play a role in cytokinesis, probably by targeting rab-11.1 to the cleavage furrows. The sequence is that of Guanine nucleotide exchange factor rei-2 from Caenorhabditis elegans.